Here is a 270-residue protein sequence, read N- to C-terminus: Phosphonoacetaldehyde hydrolase (270 aa).

Asp11 (nucleophile) is an active-site residue. Mg(2+) contacts are provided by Asp11 and Ala13. The Schiff-base intermediate with substrate role is filled by Lys53. Position 187 (Asp187) interacts with Mg(2+).

It belongs to the HAD-like hydrolase superfamily. PhnX family. In terms of assembly, homodimer. The cofactor is Mg(2+).

It catalyses the reaction phosphonoacetaldehyde + H2O = acetaldehyde + phosphate + H(+). Involved in phosphonate degradation. In Salmonella paratyphi C (strain RKS4594), this protein is Phosphonoacetaldehyde hydrolase.